Here is a 790-residue protein sequence, read N- to C-terminus: Nuclear cap-binding protein subunit 1 (790 aa).

A disordered region spans residues 1–26 (MSRRRHSYENDGGQPHKRRKTSDANE). Residues 3–20 (RRRHSYENDGGQPHKRRK) carry the Nuclear localization signal motif. Serine 7 carries the post-translational modification Phosphoserine. Position 21 is a phosphothreonine (threonine 21). Serine 22 and serine 201 each carry phosphoserine. The MIF4G domain maps to 28 to 240 (EDHLESLICK…CLWAQIQKLK (213 aa)). An N6-acetyllysine modification is found at lysine 204. A coiled-coil region spans residues 643 to 713 (STIRKMNKHV…SEQKNLFLVI (71 aa)). The tract at residues 666 to 685 (LARQHKRRSDDDDRSSDRKD) is disordered. Residue lysine 684 forms a Glycyl lysine isopeptide (Lys-Gly) (interchain with G-Cter in SUMO2) linkage. Lysine 698 carries the N6-acetyllysine modification.

It belongs to the NCBP1 family. In terms of assembly, component of the nuclear cap-binding complex (CBC), a heterodimer composed of NCBP1/CBP80 and NCBP2/CBP20 that interacts with m7GpppG-capped RNA. Found in a U snRNA export complex containing PHAX/RNUXA, NCBP1/CBP80, NCBP2/CBP20, RAN, XPO1 and m7G-capped RNA. Identified in a IGF2BP1-dependent mRNP granule complex containing untranslated mRNAs. Interacts with PHAX/RNUXA, SRRT/ARS2, EIF4G2, IGF2BP1, HNRNPF, HNRNPH1, KIAA0427/CTIF, PARN, DROSHA, UPF1 and ALYREF/THOC4. May interact with EIF4G1; the interaction is however controversial. The large PER complex involved in the repression of transcriptional termination is composed of at least PER2, CDK9, DDX5, DHX9, NCBP1/CBP80 and POLR2A (active). Component of an alternative nuclear cap-binding complex (CBC) composed of NCBP1/CBP80 and NCBP3. Interacts with METTL3. Interacts with ZFC3H1 in a RNase-insensitive manner. Interacts with MTREX. Interacts with TASOR. Interacts with DHX34; the interaction is RNA-dependent. Interacts with KPNA3. Dephosphorylated at Thr-21 by the PNUTS-PP1 complex during RNA polymerase II transcription pause-release. As to expression, expressed in the spermatogonia, spermatocytes and granular cells within the cerebellum.

It is found in the nucleus. The protein resides in the cytoplasm. Component of the cap-binding complex (CBC), which binds cotranscriptionally to the 5'-cap of pre-mRNAs and is involved in various processes such as pre-mRNA splicing, translation regulation, nonsense-mediated mRNA decay, RNA-mediated gene silencing (RNAi) by microRNAs (miRNAs) and mRNA export. The CBC complex is involved in mRNA export from the nucleus via its interaction with ALYREF/THOC4/ALY, leading to the recruitment of the mRNA export machinery to the 5'-end of mRNA and to mRNA export in a 5' to 3' direction through the nuclear pore. The CBC complex is also involved in mediating U snRNA and intronless mRNAs export from the nucleus. The CBC complex is essential for a pioneer round of mRNA translation, before steady state translation when the CBC complex is replaced by cytoplasmic cap-binding protein eIF4E. The pioneer round of mRNA translation mediated by the CBC complex plays a central role in nonsense-mediated mRNA decay (NMD), NMD only taking place in mRNAs bound to the CBC complex, but not on eIF4E-bound mRNAs. The CBC complex enhances NMD in mRNAs containing at least one exon-junction complex (EJC) via its interaction with UPF1, promoting the interaction between UPF1 and UPF2. The CBC complex is also involved in 'failsafe' NMD, which is independent of the EJC complex, while it does not participate in Staufen-mediated mRNA decay (SMD). During cell proliferation, the CBC complex is also involved in microRNAs (miRNAs) biogenesis via its interaction with SRRT/ARS2 and is required for miRNA-mediated RNA interference. The CBC complex also acts as a negative regulator of PARN, thereby acting as an inhibitor of mRNA deadenylation. In the CBC complex, NCBP1/CBP80 does not bind directly capped RNAs (m7GpppG-capped RNA) but is required to stabilize the movement of the N-terminal loop of NCBP2/CBP20 and lock the CBC into a high affinity cap-binding state with the cap structure. Associates with NCBP3 to form an alternative cap-binding complex (CBC) which plays a key role in mRNA export and is particularly important in cellular stress situations such as virus infections. The conventional CBC with NCBP2 binds both small nuclear RNA (snRNA) and messenger (mRNA) and is involved in their export from the nucleus whereas the alternative CBC with NCBP3 does not bind snRNA and associates only with mRNA thereby playing a role only in mRNA export. NCBP1/CBP80 is required for cell growth and viability. In Mus musculus (Mouse), this protein is Nuclear cap-binding protein subunit 1 (Ncbp1).